The primary structure comprises 522 residues: Vicilin-like seed storage protein At4g36700 (522 aa).

The first 25 residues, 1-25, serve as a signal peptide directing secretion; it reads MTRFAVLPLSVLLLVLLFLCTESLA. 5 N-linked (GlcNAc...) asparagine glycosylation sites follow: asparagine 206, asparagine 303, asparagine 341, asparagine 374, and asparagine 414. The 157-residue stretch at 265–421 folds into the Cupin type-1 domain; it reads FNVFESEPDF…SLNVSSVTID (157 aa). Residues 457 to 522 form a disordered region; that stretch reads DERKRRHDER…EWEMEGEEES (66 aa). Basic and acidic residues-rich tracts occupy residues 466 to 491 and 501 to 515; these read RKKE…EKKR and EELR…KEWE.

It belongs to the 7S seed storage protein family.

Its function is as follows. Seed storage protein. The chain is Vicilin-like seed storage protein At4g36700 from Arabidopsis thaliana (Mouse-ear cress).